We begin with the raw amino-acid sequence, 1049 residues long: Bifunctional cytochrome P450/NADPH--P450 reductase (1049 aa).

The interval 2 to 472 (TIKEMPQPKT…STEQSAKKVR (471 aa)) is cytochrome P450. A (9Z)-hexadecenoate-binding site is contributed by tyrosine 52. Cysteine 401 contributes to the heme binding site. The interval 473–1049 (KKAENAHNTP…GRYAKDVWAG (577 aa)) is NADPH--P450 reductase. The Flavodoxin-like domain occupies 483-622 (LLVLYGSNMG…TYEEWREHMW (140 aa)). FMN-binding positions include 489–494 (SNMGTA), 536–539 (SYNG), 570–572 (CGD), and 578–580 (TYQ). An FAD-binding FR-type domain is found at 660–892 (HGAFSTNVVA…STPQSEFTLP (233 aa)).

The protein in the N-terminal section; belongs to the cytochrome P450 family. FAD is required as a cofactor. FMN serves as cofactor. Requires heme as cofactor.

It is found in the cytoplasm. The catalysed reaction is 2 oxidized [cytochrome P450] + NADPH = 2 reduced [cytochrome P450] + NADP(+) + H(+). It catalyses the reaction an organic molecule + reduced [NADPH--hemoprotein reductase] + O2 = an alcohol + oxidized [NADPH--hemoprotein reductase] + H2O + H(+). Its activity is regulated as follows. Inhibited by N-(12-imidazolyl-dodecanoyl)-L-leucine. Functions as a fatty acid monooxygenase. Catalyzes hydroxylation of fatty acids at omega-1, omega-2 and omega-3 positions. Shows activity toward medium and long-chain fatty acids, with optimum chain lengths of 12, 14 and 16 carbons (lauric, myristic, and palmitic acids). Able to metabolize some of these primary metabolites to secondary and tertiary products. Marginal activity towards short chain lengths of 8-10 carbons. Hydroxylates highly branched fatty acids, which play an essential role in membrane fluidity regulation. Also displays a NADPH-dependent reductase activity in the C-terminal domain, which allows electron transfer from NADPH to the heme iron of the cytochrome P450 N-terminal domain. Involved in inactivation of quorum sensing signals of other competing bacteria by oxidazing efficiently acyl homoserine lactones (AHLs), molecules involved in quorum sensing signaling pathways, and their lactonolysis products acyl homoserines (AHs). The chain is Bifunctional cytochrome P450/NADPH--P450 reductase from Priestia megaterium (strain ATCC 14581 / DSM 32 / CCUG 1817 / JCM 2506 / NBRC 15308 / NCIMB 9376 / NCTC 10342 / NRRL B-14308 / VKM B-512 / Ford 19) (Bacillus megaterium).